Consider the following 397-residue polypeptide: MSLLNPYFGEFGGRFVPQILIPALNQLEAAFVDARDDPTFQTQFNDLLHNYAGRPTALTLCRNLTAGTRTRLYLKREDLLHGGAHKTNQVLGQALLARRMGKTEIIAETGAGQHGVATALACALLGLKCRVYMGAKDVARQSPNVFRMRLMGAEVIPVHSGSATLKDACNEALRDWSANYDQAHYLLGTAAGPHPYPTIVREFQRMIGAETRRQILQAEGRLPDAVLACVGGGSNAIGMFADFIDDASVQLIGVEPAGLGIETGQHGAPLSHGRVGIYFGMRSPMMQTAEGQIEESYSLSAGLDFPSVGPQHAHLNSIGRADYVSATDDEALAAFMQLSRQEGIIPALESAHALAHALKLIHQQPEKEQLLVVNLSGRGDKDIFTVHDILQSRGEIQ.

Residue Lys-86 is modified to N6-(pyridoxal phosphate)lysine.

The protein belongs to the TrpB family. Tetramer of two alpha and two beta chains. The cofactor is pyridoxal 5'-phosphate.

It carries out the reaction (1S,2R)-1-C-(indol-3-yl)glycerol 3-phosphate + L-serine = D-glyceraldehyde 3-phosphate + L-tryptophan + H2O. The protein operates within amino-acid biosynthesis; L-tryptophan biosynthesis; L-tryptophan from chorismate: step 5/5. Its function is as follows. The beta subunit is responsible for the synthesis of L-tryptophan from indole and L-serine. This is Tryptophan synthase beta chain from Edwardsiella ictaluri (strain 93-146).